Here is a 416-residue protein sequence, read N- to C-terminus: UDP-N-acetylmuramoylalanine--D-glutamate ligase (416 aa).

An ATP-binding site is contributed by 108 to 114 (GTTGKTT).

The protein belongs to the MurCDEF family.

It localises to the cytoplasm. It carries out the reaction UDP-N-acetyl-alpha-D-muramoyl-L-alanine + D-glutamate + ATP = UDP-N-acetyl-alpha-D-muramoyl-L-alanyl-D-glutamate + ADP + phosphate + H(+). It participates in cell wall biogenesis; peptidoglycan biosynthesis. Its function is as follows. Cell wall formation. Catalyzes the addition of glutamate to the nucleotide precursor UDP-N-acetylmuramoyl-L-alanine (UMA). In Chlamydia trachomatis serovar A (strain ATCC VR-571B / DSM 19440 / HAR-13), this protein is UDP-N-acetylmuramoylalanine--D-glutamate ligase.